Here is a 426-residue protein sequence, read N- to C-terminus: Glutamate-1-semialdehyde 2,1-aminomutase (426 aa).

Lysine 265 is subject to N6-(pyridoxal phosphate)lysine.

It belongs to the class-III pyridoxal-phosphate-dependent aminotransferase family. HemL subfamily. In terms of assembly, homodimer. The cofactor is pyridoxal 5'-phosphate.

It is found in the cytoplasm. The catalysed reaction is (S)-4-amino-5-oxopentanoate = 5-aminolevulinate. It participates in porphyrin-containing compound metabolism; protoporphyrin-IX biosynthesis; 5-aminolevulinate from L-glutamyl-tRNA(Glu): step 2/2. The sequence is that of Glutamate-1-semialdehyde 2,1-aminomutase from Escherichia coli O7:K1 (strain IAI39 / ExPEC).